The sequence spans 256 residues: Adenylate kinase (256 aa).

ATP is bound at residue 49-54; it reads GAGKGT. Residues 69–98 are NMP; sequence ATGDMLRDQVEKKTPLGIAAKKIMDAGGLV. AMP contacts are provided by residues Thr-70, Arg-75, 96 to 98, 125 to 128, and Gln-132; these read GLV and GFPR. The LID stretch occupies residues 166-203; the sequence is GRLIHPASGRSYHKIFNPPKKAGIDDLTGEPLIQRSDD. Residues Arg-167 and 176–177 each bind ATP; that span reads SY. AMP contacts are provided by Arg-200 and Arg-211. Position 239 (Gln-239) interacts with ATP.

It belongs to the adenylate kinase family. AK2 subfamily. Monomer.

Its subcellular location is the cytoplasm. It localises to the cytosol. The protein resides in the mitochondrion intermembrane space. The enzyme catalyses AMP + ATP = 2 ADP. In terms of biological role, catalyzes the reversible transfer of the terminal phosphate group between ATP and AMP. Plays an important role in cellular energy homeostasis and in adenine nucleotide metabolism. Adenylate kinase activity is critical for regulation of the phosphate utilization and the AMP de novo biosynthesis pathways. This chain is Adenylate kinase, found in Coprinopsis cinerea (strain Okayama-7 / 130 / ATCC MYA-4618 / FGSC 9003) (Inky cap fungus).